Here is a 440-residue protein sequence, read N- to C-terminus: Phosphatidylcholine-sterol acyltransferase (440 aa).

The N-terminal stretch at 1–24 (MGPPGSPWQWVTLLLGLLLPPAAP) is a signal peptide. A glycan (N-linked (GlcNAc...) (complex) asparagine) is linked at N44. The cysteines at positions 74 and 98 are disulfide-linked. The N-linked (GlcNAc...) (complex) asparagine glycan is linked to N108. The Nucleophile role is filled by S205. N-linked (GlcNAc...) (complex) asparagine glycosylation is present at N296. C337 and C380 are disulfide-bonded. Catalysis depends on charge relay system residues D369 and H401. The N-linked (GlcNAc...) (complex) asparagine glycan is linked to N408. O-linked (GalNAc...) threonine glycosylation occurs at T431. S433 carries an O-linked (GalNAc...) serine glycan.

It belongs to the AB hydrolase superfamily. Lipase family. In terms of processing, O- and N-glycosylated. O-glycosylation on Thr-431 and Ser-433 consists of sialylated galactose beta 1--&gt;3N-acetylgalactosamine structures. N-glycosylated sites contain sialylated triantennary and/or biantennary complex structures. As to expression, detected in blood plasma. Detected in cerebral spinal fluid (at protein level). Detected in liver. Expressed mainly in brain, liver and testes.

Its subcellular location is the secreted. It carries out the reaction a sterol + a 1,2-diacyl-sn-glycero-3-phosphocholine = a sterol ester + a 1-acyl-sn-glycero-3-phosphocholine. The catalysed reaction is a 1-O-alkyl-2-acetyl-sn-glycero-3-phosphocholine + H2O = a 1-O-alkyl-sn-glycero-3-phosphocholine + acetate + H(+). The enzyme catalyses a 1-hexadecanoyl-2-acyl-sn-glycero-3-phosphocholine + (24S)-hydroxycholesterol = (24S)-24-hydroxycholesterol ester + 1-hexadecanoyl-sn-glycero-3-phosphocholine. It catalyses the reaction (24S)-hydroxycholesterol + 1-hexadecanoyl-2-(9Z,12Z-octadecadienoyl)-sn-glycero-3-phosphocholine = (24S)-hydroxycholesterol 3-linoleoate + 1-hexadecanoyl-sn-glycero-3-phosphocholine. It carries out the reaction 1-hexadecanoyl-2-(5Z,8Z,11Z,14Z-eicosatetraenoyl)-sn-glycero-3-phosphocholine + cholesterol = cholesteryl (5Z,8Z,11Z,14Z)-eicosatetraenoate + 1-hexadecanoyl-sn-glycero-3-phosphocholine. The catalysed reaction is 1-hexadecanoyl-2-(9Z-octadecenoyl)-sn-glycero-3-phosphocholine + cholesterol = cholesteryl (9Z-octadecenoate) + 1-hexadecanoyl-sn-glycero-3-phosphocholine. The enzyme catalyses 1-hexadecanoyl-2-(8Z,11Z,14Z-eicosatrienoyl)-sn-glycero-3-phosphocholine + cholesterol = cholesteryl (8Z,11Z,14Z)-eicosatrienoate + 1-hexadecanoyl-sn-glycero-3-phosphocholine. It catalyses the reaction 1-hexadecanoyl-2-(5Z,8Z,11Z-eicosatrienoyl)-sn-glycero-3-phosphocholine + cholesterol = cholesteryl (5Z,8Z,11Z)-eicosatrienoate + 1-hexadecanoyl-sn-glycero-3-phosphocholine. It carries out the reaction 1-hexadecanoyl-2-(5Z,8Z,11Z,14Z,17Z-eicosapentaenoyl)-sn-glycero-3-phosphocholine + cholesterol = (5Z,8Z,11Z,14Z,17Z-eicosapentaenoyl)-cholesterol + 1-hexadecanoyl-sn-glycero-3-phosphocholine. The catalysed reaction is 1-hexadecanoyl-2-(9Z,12Z-octadecadienoyl)-sn-glycero-3-phosphocholine + cholesterol = cholesteryl (9Z,12Z)-octadecadienoate + 1-hexadecanoyl-sn-glycero-3-phosphocholine. The enzyme catalyses 1-hexadecanoyl-2-(6Z,9Z,12Z-octadecatrienoyl)-sn-glycero-3-phosphocholine + cholesterol = (6Z,9Z,12Z-octadecatrienoyl)-cholesterol + 1-hexadecanoyl-sn-glycero-3-phosphocholine. It catalyses the reaction 1-hexadecanoyl-2-(11Z,14Z,17Z-eicosatrienoyl)-sn-glycero-3-phosphocholine + cholesterol = (11Z,14Z,17Z-eicosatrienoyl)-cholesterol + 1-hexadecanoyl-sn-glycero-3-phosphocholine. It carries out the reaction 1-hexadecanoyl-2-(9Z,12Z,15Z-octadecatrienoyl)-sn-glycero-3-phosphocholine + cholesterol = (9Z,12Z,15Z-octadecatrienoyl)-cholesterol + 1-hexadecanoyl-sn-glycero-3-phosphocholine. The catalysed reaction is 1-hexadecanoyl-2-(9Z,12Z-octadecadienoyl)-sn-glycero-3-phosphocholine + H2O = (9Z,12Z)-octadecadienoate + 1-hexadecanoyl-sn-glycero-3-phosphocholine + H(+). The enzyme catalyses 1-hexadecanoyl-2-(5Z,8Z,11Z,14Z-eicosatetraenoyl)-sn-glycero-3-phosphocholine + H2O = 1-hexadecanoyl-sn-glycero-3-phosphocholine + (5Z,8Z,11Z,14Z)-eicosatetraenoate + H(+). It catalyses the reaction a 1-O-alkyl-2-acetyl-sn-glycero-3-phosphocholine + 1-hexadecanoyl-sn-glycero-3-phosphocholine = 1-hexadecanoyl-2-acetyl-sn-glycero-3-phosphocholine + a 1-O-alkyl-sn-glycero-3-phosphocholine. With respect to regulation, APOA1 is the most potent activator in plasma. Also activated by APOE, APOC1 and APOA4. Inhibited by haptoglobin and 5,5'-dithiobis-(2-nitrobenzoic acid) (DTNB). Its function is as follows. Central enzyme in the extracellular metabolism of plasma lipoproteins. Synthesized mainly in the liver and secreted into plasma where it converts cholesterol and phosphatidylcholines (lecithins) to cholesteryl esters and lysophosphatidylcholines on the surface of high and low density lipoproteins (HDLs and LDLs). The cholesterol ester is then transported back to the liver. Has a preference for plasma 16:0-18:2 or 18:O-18:2 phosphatidylcholines. Also produced in the brain by primary astrocytes, and esterifies free cholesterol on nascent APOE-containing lipoproteins secreted from glia and influences cerebral spinal fluid (CSF) APOE- and APOA1 levels. Together with APOE and the cholesterol transporter ABCA1, plays a key role in the maturation of glial-derived, nascent lipoproteins. Required for remodeling high-density lipoprotein particles into their spherical forms. Catalyzes the hydrolysis of 1-O-alkyl-2-acetyl-sn-glycero-3-phosphocholine (platelet-activating factor or PAF) to 1-O-alkyl-sn-glycero-3-phosphocholine (lyso-PAF). Also catalyzes the transfer of the acetate group from PAF to 1-hexadecanoyl-sn-glycero-3-phosphocholine forming lyso-PAF. Catalyzes the esterification of (24S)-hydroxycholesterol (24(S)OH-C), also known as cerebrosterol to produce 24(S)OH-C monoesters. This Homo sapiens (Human) protein is Phosphatidylcholine-sterol acyltransferase (LCAT).